Consider the following 203-residue polypeptide: Imidazoleglycerol-phosphate dehydratase (203 aa).

Belongs to the imidazoleglycerol-phosphate dehydratase family.

It is found in the cytoplasm. The enzyme catalyses D-erythro-1-(imidazol-4-yl)glycerol 3-phosphate = 3-(imidazol-4-yl)-2-oxopropyl phosphate + H2O. It participates in amino-acid biosynthesis; L-histidine biosynthesis; L-histidine from 5-phospho-alpha-D-ribose 1-diphosphate: step 6/9. The protein is Imidazoleglycerol-phosphate dehydratase of Deinococcus geothermalis (strain DSM 11300 / CIP 105573 / AG-3a).